We begin with the raw amino-acid sequence, 206 residues long: Cytochrome c oxidase assembly protein CtaG (206 aa).

Residues 1–22 (MTEQPTNRNDVPRRGLGRDATV) lie on the Cytoplasmic side of the membrane. The chain crosses the membrane as a helical; Signal-anchor for type II membrane protein span at residues 23-43 (ASICGLVVALMVGASYAAVPF). Residues 44–206 (YNWFCRATGF…GEPDSRKGAL (163 aa)) lie on the Periplasmic side of the membrane.

Belongs to the COX11/CtaG family.

Its subcellular location is the cell inner membrane. Its function is as follows. Exerts its effect at some terminal stage of cytochrome c oxidase synthesis, probably by being involved in the insertion of the copper B into subunit I. The polypeptide is Cytochrome c oxidase assembly protein CtaG (Rhodopseudomonas palustris (strain BisB18)).